The chain runs to 342 residues: Holliday junction branch migration complex subunit RuvB (342 aa).

Residues 1 to 184 (MDNERVITAV…FGIVQRLEFY (184 aa)) form a large ATPase domain (RuvB-L) region. ATP-binding positions include Ile23, Arg24, Gly65, Lys68, Thr69, Thr70, 131–133 (EDY), Arg174, Tyr184, and Arg221. Thr69 provides a ligand contact to Mg(2+). The segment at 185–255 (SVDDLSGIVS…IAQRALDMLE (71 aa)) is small ATPAse domain (RuvB-S). The head domain (RuvB-H) stretch occupies residues 258-342 (SCGLDGTDRR…PRQDGDLFND (85 aa)). Residues Arg313 and Arg318 each contribute to the DNA site.

The protein belongs to the RuvB family. In terms of assembly, homohexamer. Forms an RuvA(8)-RuvB(12)-Holliday junction (HJ) complex. HJ DNA is sandwiched between 2 RuvA tetramers; dsDNA enters through RuvA and exits via RuvB. An RuvB hexamer assembles on each DNA strand where it exits the tetramer. Each RuvB hexamer is contacted by two RuvA subunits (via domain III) on 2 adjacent RuvB subunits; this complex drives branch migration. In the full resolvosome a probable DNA-RuvA(4)-RuvB(12)-RuvC(2) complex forms which resolves the HJ.

The protein localises to the cytoplasm. The catalysed reaction is ATP + H2O = ADP + phosphate + H(+). Functionally, the RuvA-RuvB-RuvC complex processes Holliday junction (HJ) DNA during genetic recombination and DNA repair, while the RuvA-RuvB complex plays an important role in the rescue of blocked DNA replication forks via replication fork reversal (RFR). RuvA specifically binds to HJ cruciform DNA, conferring on it an open structure. The RuvB hexamer acts as an ATP-dependent pump, pulling dsDNA into and through the RuvAB complex. RuvB forms 2 homohexamers on either side of HJ DNA bound by 1 or 2 RuvA tetramers; 4 subunits per hexamer contact DNA at a time. Coordinated motions by a converter formed by DNA-disengaged RuvB subunits stimulates ATP hydrolysis and nucleotide exchange. Immobilization of the converter enables RuvB to convert the ATP-contained energy into a lever motion, pulling 2 nucleotides of DNA out of the RuvA tetramer per ATP hydrolyzed, thus driving DNA branch migration. The RuvB motors rotate together with the DNA substrate, which together with the progressing nucleotide cycle form the mechanistic basis for DNA recombination by continuous HJ branch migration. Branch migration allows RuvC to scan DNA until it finds its consensus sequence, where it cleaves and resolves cruciform DNA. This chain is Holliday junction branch migration complex subunit RuvB, found in Alcanivorax borkumensis (strain ATCC 700651 / DSM 11573 / NCIMB 13689 / SK2).